A 58-amino-acid polypeptide reads, in one-letter code: Apelin receptor early endogenous ligand (58 aa).

The signal sequence occupies residues 1–22 (MRFFHPLYLLLLLLTVLVLISA).

Belongs to the Elabela/Toddler family. As to quaternary structure, interacts with aplnra and aplnrb. As to expression, expressed ubiquitously during late blastula and gastrula stages and becomes restricted to the lateral mesoderm, endoderm, and anterior and posterior notochord after gastrulation.

It is found in the secreted. It localises to the extracellular space. In terms of biological role, peptide hormone that functions as endogenous ligand for the G-protein-coupled apelin receptor (aplnra and/or aplnrb), that plays a role in the regulation of normal cardiovascular function and fluid homeostasis. Functions as a balanced agonist activating both G(i) protein pathway and beta-arrestin pathway of APLNR. Downstream G proteins activation, apelin can inhibit cAMP production and activate key intracellular effectors such as ERKs. On the other hand, APLNR activation induces beta-arrestin recruitment to the membrane leading to desensitization and internalization of the receptor. Required for mesendodermal differentiation, blood vessels formation and heart morphogenesis during early development and for adult cardiovascular homeostasis. Acts as a motogen by promoting mesendodermal cell migration during gastrulation by binding and activating the apelin receptor. Acts as an early embryonic regulator of cellular movement with a role in migration and development of cardiac progenitor cells. May act as a chemoattractant for the activation of angioblast migration toward the embryonic midline, i.e. the position of the future vessel formation, during vasculogenesis. Positively regulates sinus venosus (SV)-derived endothelial cells migration into the developing heart to promote coronary blood vessel sprouting. Involved in cardioprotective functions during heart failure. Mediates myocardial contractility in an ERK1/2-dependent manner. The chain is Apelin receptor early endogenous ligand from Danio rerio (Zebrafish).